A 487-amino-acid chain; its full sequence is Glutamyl-tRNA(Gln) amidotransferase subunit A (487 aa).

Catalysis depends on charge relay system residues Lys-78 and Ser-153. The active-site Acyl-ester intermediate is the Ser-177.

It belongs to the amidase family. GatA subfamily. As to quaternary structure, heterotrimer of A, B and C subunits.

It carries out the reaction L-glutamyl-tRNA(Gln) + L-glutamine + ATP + H2O = L-glutaminyl-tRNA(Gln) + L-glutamate + ADP + phosphate + H(+). In terms of biological role, allows the formation of correctly charged Gln-tRNA(Gln) through the transamidation of misacylated Glu-tRNA(Gln) in organisms which lack glutaminyl-tRNA synthetase. The reaction takes place in the presence of glutamine and ATP through an activated gamma-phospho-Glu-tRNA(Gln). The polypeptide is Glutamyl-tRNA(Gln) amidotransferase subunit A (Oenococcus oeni (strain ATCC BAA-331 / PSU-1)).